The primary structure comprises 280 residues: Protein MGF 505-3R (280 aa).

This sequence belongs to the asfivirus MGF 505 family.

Plays a role in virus cell tropism, and may be required for efficient virus replication in macrophages. This chain is Protein MGF 505-3R, found in African swine fever virus (isolate Warthog/Namibia/Wart80/1980) (ASFV).